The following is a 1434-amino-acid chain: Probable ATP-dependent RNA helicase spindle-E (1434 aa).

The disordered stretch occupies residues 66 to 86 (VGGPSNTKRTKTLDELESDDD). In terms of domain architecture, Helicase ATP-binding spans 127–294 (MKAIKENPVV…FASCKSMPPV (168 aa)). Position 140–147 (140–147 (GETGCGKT)) interacts with ATP. The DEAH box signature appears at 240 to 243 (DEVH). The Helicase C-terminal domain maps to 354–526 (QSEQSYEEAK…SSVLKAKELD (173 aa)). The Tudor domain maps to 938 to 1001 (ASAITKGLQL…RLMRHELRRD (64 aa)).

It belongs to the DEAD box helicase family. DEAH subfamily.

The protein resides in the cytoplasm. It carries out the reaction ATP + H2O = ADP + phosphate + H(+). Functionally, probable ATP-binding RNA helicase which plays a central role during spermatogenesis and oogenesis by repressing transposable elements and preventing their mobilization, which is essential for the germline integrity. Acts via the piRNA metabolic process, which mediates the repression of transposable elements during meiosis by forming complexes composed of piRNAs and Piwi and govern the methylation and subsequent repression of transposons. Involved in the repression of LTR retrotransposon copia. Also involved in telomere regulation by repressing specialized telomeric retroelements HeT-A, TAHRE, and TART; Drosophila telomeres being maintained by transposition of specialized telomeric retroelements. Involved in telomeric trans-silencing, a repression mechanism by which a transposon or a transgene inserted in subtelomeric heterochromatin has the capacity to repress in trans in the female germline, a homologous transposon, or transgene located in euchromatin. Involved in the repression of testis-expressed Stellate genes by the homologous Su(Ste) repeats. Required for anteroposterior and dorsoventral axis formation during oogenesis. This chain is Probable ATP-dependent RNA helicase spindle-E (spn-E), found in Drosophila grimshawi (Hawaiian fruit fly).